A 144-amino-acid polypeptide reads, in one-letter code: Phospholipase A2, membrane associated (144 aa).

The N-terminal stretch at 1 to 20 (MKTLLLLAVIMIFGLLQAHG) is a signal peptide. Intrachain disulfides connect Cys46–Cys137, Cys48–Cys64, Cys63–Cys117, Cys69–Cys144, Cys70–Cys110, Cys79–Cys103, and Cys97–Cys108. Ca(2+) is bound by residues His47, Gly49, and Gly51. His67 is a catalytic residue. Ca(2+) is bound at residue Asp68. The active site involves Asp111.

This sequence belongs to the phospholipase A2 family. Ca(2+) is required as a cofactor. In terms of tissue distribution, expressed in various tissues including heart, kidney, liver, lung, pancreas, placenta, skeletal muscle, prostate, ovary, colon and small intestine. Not detected in lymphoid organs and brain. Expressed in platelets (at protein level).

It is found in the secreted. It localises to the cell membrane. The protein localises to the mitochondrion outer membrane. The enzyme catalyses a 1,2-diacyl-sn-glycero-3-phosphoethanolamine + H2O = a 1-acyl-sn-glycero-3-phosphoethanolamine + a fatty acid + H(+). The catalysed reaction is 1-hexadecanoyl-2-(9Z-octadecenoyl)-sn-glycero-3-phosphoethanolamine + H2O = 1-hexadecanoyl-sn-glycero-3-phosphoethanolamine + (9Z)-octadecenoate + H(+). It catalyses the reaction 1-hexadecanoyl-2-(9Z,12Z-octadecadienoyl)-sn-glycero-3-phosphoethanolamine + H2O = 1-hexadecanoyl-sn-glycero-3-phosphoethanolamine + (9Z,12Z)-octadecadienoate + H(+). It carries out the reaction 1-hexadecanoyl-2-(5Z,8Z,11Z,14Z-eicosatetraenoyl)-sn-glycero-3-phosphoethanolamine + H2O = 1-hexadecanoyl-sn-glycero-3-phosphoethanolamine + (5Z,8Z,11Z,14Z)-eicosatetraenoate + H(+). The enzyme catalyses N-hexadecanoyl-1,2-di-(9Z-octadecenoyl)-sn-glycero-3-phosphoethanolamine + H2O = N-hexadecanoyl-1-(9Z-octadecenoyl)-sn-glycero-3-phosphoethanolamine + (9Z)-octadecenoate + H(+). The catalysed reaction is 1,2-dihexadecanoyl-sn-glycero-3-phospho-(1'-sn-glycerol) + H2O = 1-hexadecanoyl-sn-glycero-3-phospho-(1'-sn-glycerol) + hexadecanoate + H(+). It catalyses the reaction 1-hexadecanoyl-2-(9Z-octadecenoyl)-sn-glycero-3-phosphoglycerol + H2O = 1-hexadecanoyl-sn-glycero-3-phosphoglycerol + (9Z)-octadecenoate + H(+). It carries out the reaction 1-hexadecanoyl-2-(9Z-octadecenoyl)-sn-glycero-3-phospho-(1'-sn-glycerol) + H2O = 1-hexadecanoyl-sn-glycero-3-phospho-(1'-sn-glycerol) + (9Z)-octadecenoate + H(+). The enzyme catalyses a 1,2-diacyl-sn-glycero-3-phosphocholine + H2O = a 1-acyl-sn-glycero-3-phosphocholine + a fatty acid + H(+). The catalysed reaction is 1,2-dihexadecanoyl-sn-glycero-3-phosphocholine + H2O = 1-hexadecanoyl-sn-glycero-3-phosphocholine + hexadecanoate + H(+). It catalyses the reaction 1-hexadecanoyl-2-(9Z-octadecenoyl)-sn-glycero-3-phosphocholine + H2O = 1-hexadecanoyl-sn-glycero-3-phosphocholine + (9Z)-octadecenoate + H(+). It carries out the reaction 1-hexadecanoyl-2-(9Z,12Z-octadecadienoyl)-sn-glycero-3-phosphocholine + H2O = (9Z,12Z)-octadecadienoate + 1-hexadecanoyl-sn-glycero-3-phosphocholine + H(+). The enzyme catalyses 1-hexadecanoyl-2-(4Z,7Z,10Z,13Z,16Z,19Z-docosahexaenoyl)-sn-glycero-3-phosphocholine + H2O = (4Z,7Z,10Z,13Z,16Z,19Z)-docosahexaenoate + 1-hexadecanoyl-sn-glycero-3-phosphocholine + H(+). Functionally, secretory calcium-dependent phospholipase A2 that primarily targets extracellular phospholipids with implications in host antimicrobial defense, inflammatory response and tissue regeneration. Hydrolyzes the ester bond of the fatty acyl group attached at sn-2 position of phospholipids (phospholipase A2 activity) with preference for phosphatidylethanolamines and phosphatidylglycerols over phosphatidylcholines. Contributes to lipid remodeling of cellular membranes and generation of lipid mediators involved in pathogen clearance. Displays bactericidal activity against Gram-positive bacteria by directly hydrolyzing phospholipids of the bacterial membrane. Upon sterile inflammation, targets membrane phospholipids of extracellular mitochondria released from activated platelets, generating free unsaturated fatty acids such as arachidonate that is used by neighboring leukocytes to synthesize inflammatory eicosanoids such as leukotrienes. Simultaneously, by compromising mitochondrial membrane integrity, promotes the release in circulation of potent damage-associated molecular pattern molecules that activate the innate immune response. Plays a stem cell regulator role in the intestinal crypt. Within intracellular compartment mediates Paneth cell differentiation and its stem cell supporting functions by inhibiting Wnt signaling pathway in intestinal stem cell (ICS). Secreted in the intestinal lumen upon inflammation, acts in an autocrine way and promotes prostaglandin E2 synthesis that stimulates Wnt signaling pathway in ICS cells and tissue regeneration. May play a role in the biosynthesis of N-acyl ethanolamines that regulate energy metabolism and inflammation. Hydrolyzes N-acyl phosphatidylethanolamines to N-acyl lysophosphatidylethanolamines, which are further cleaved by a lysophospholipase D to release N-acyl ethanolamines. Independent of its catalytic activity, acts as a ligand for integrins. Binds to and activates integrins ITGAV:ITGB3, ITGA4:ITGB1 and ITGA5:ITGB1. Binds to a site (site 2) which is distinct from the classical ligand-binding site (site 1) and induces integrin conformational changes and enhanced ligand binding to site 1. Induces cell proliferation in an integrin-dependent manner. This Homo sapiens (Human) protein is Phospholipase A2, membrane associated (PLA2G2A).